The following is a 206-amino-acid chain: Thymidylate kinase (206 aa).

Position 10–17 (10–17 (GIDGAGKS)) interacts with ATP.

It belongs to the thymidylate kinase family.

The enzyme catalyses dTMP + ATP = dTDP + ADP. In terms of biological role, phosphorylation of dTMP to form dTDP in both de novo and salvage pathways of dTTP synthesis. This Neisseria meningitidis serogroup B (strain ATCC BAA-335 / MC58) protein is Thymidylate kinase (tmk).